We begin with the raw amino-acid sequence, 386 residues long: SWI/SNF-related matrix-associated actin-dependent regulator of chromatin subfamily B member 1 (386 aa).

A DNA-binding region spans residues 1–114 (MMMMALSKTF…DEKYKAVSIS (114 aa)).

The protein belongs to the SNF5 family. Component of the multiprotein chromatin-remodeling complexes SWI/SNF. Component of neural progenitors-specific chromatin remodeling complex (npBAF complex) and the neuron-specific chromatin remodeling complex (nBAF complex). Component of the BAF (SWI/SNF) chromatin remodeling complex. Component of the SWI/SNF-B (PBAF) chromatin remodeling complex. Binds to double-stranded DNA.

It localises to the nucleus. Its function is as follows. Involved in chromatin-remodeling. Core component of the BAF (SWI/SNF) complex. This ATP-dependent chromatin-remodeling complex plays important roles in cell proliferation and differentiation, in cellular antiviral activities and inhibition of tumor formation. Belongs to the neural progenitors-specific chromatin remodeling complex (npBAF complex) and the neuron-specific chromatin remodeling complex (nBAF complex) and may play a role in neural development. The chain is SWI/SNF-related matrix-associated actin-dependent regulator of chromatin subfamily B member 1 (SMARCB1) from Gallus gallus (Chicken).